A 117-amino-acid chain; its full sequence is Large ribosomal subunit protein uL18 (117 aa).

Belongs to the universal ribosomal protein uL18 family. As to quaternary structure, part of the 50S ribosomal subunit; part of the 5S rRNA/L5/L18/L25 subcomplex. Contacts the 5S and 23S rRNAs.

In terms of biological role, this is one of the proteins that bind and probably mediate the attachment of the 5S RNA into the large ribosomal subunit, where it forms part of the central protuberance. This Serratia proteamaculans (strain 568) protein is Large ribosomal subunit protein uL18.